Reading from the N-terminus, the 901-residue chain is Protein translocase subunit SecA (901 aa).

ATP contacts are provided by residues glutamine 87, 105-109, and aspartate 512; that span reads GEGKT. Residues cysteine 885, cysteine 887, cysteine 896, and histidine 897 each coordinate Zn(2+).

The protein belongs to the SecA family. In terms of assembly, monomer and homodimer. Part of the essential Sec protein translocation apparatus which comprises SecA, SecYEG and auxiliary proteins SecDF-YajC and YidC. Zn(2+) is required as a cofactor.

The protein resides in the cell inner membrane. It is found in the cytoplasm. The enzyme catalyses ATP + H2O + cellular proteinSide 1 = ADP + phosphate + cellular proteinSide 2.. Part of the Sec protein translocase complex. Interacts with the SecYEG preprotein conducting channel. Has a central role in coupling the hydrolysis of ATP to the transfer of proteins into and across the cell membrane, serving both as a receptor for the preprotein-SecB complex and as an ATP-driven molecular motor driving the stepwise translocation of polypeptide chains across the membrane. The polypeptide is Protein translocase subunit SecA (Salmonella arizonae (strain ATCC BAA-731 / CDC346-86 / RSK2980)).